Reading from the N-terminus, the 331-residue chain is UPF0324 membrane protein SAS0317 (331 aa).

Transmembrane regions (helical) follow at residues 9 to 26 (FMIG…SFLA), 31 to 48 (ILDK…AILY), 69 to 88 (LLRF…DIIG), 93 to 115 (LLAI…NKLL), 122 to 144 (ALLL…APIF), 154 to 176 (SIGI…YAIF), 183 to 202 (YGAW…LAGG), 217 to 234 (LGRV…ILIM), 247 to 269 (ISIP…VTIP), 273 to 295 (LNIL…GLNV), and 308 to 330 (LMTI…HWLY).

The protein belongs to the UPF0324 family.

Its subcellular location is the cell membrane. The polypeptide is UPF0324 membrane protein SAS0317 (Staphylococcus aureus (strain MSSA476)).